The chain runs to 201 residues: Alpha-1-acid glycoprotein (201 aa).

The first 18 residues, 1-18, serve as a signal peptide directing secretion; that stretch reads MALPWALAVLSLLPLLHA. Asn-25, Asn-33, Asn-87, Asn-93, Asn-103, and Asn-169 each carry an N-linked (GlcNAc...) asparagine glycan. Cysteines 90 and 183 form a disulfide.

This sequence belongs to the calycin superfamily. Lipocalin family.

The protein localises to the secreted. Its function is as follows. Functions as a transport protein in the blood stream. Binds various ligands in the interior of its beta-barrel domain. Appears to function in modulating the activity of the immune system during the acute-phase reaction. The chain is Alpha-1-acid glycoprotein (ORM1) from Oryctolagus cuniculus (Rabbit).